Here is a 558-residue protein sequence, read N- to C-terminus: Arginine--tRNA ligase (558 aa).

Positions 116–126 match the 'HIGH' region motif; that stretch reads ANPNGPLHVGH.

It belongs to the class-I aminoacyl-tRNA synthetase family.

The protein resides in the cytoplasm. The enzyme catalyses tRNA(Arg) + L-arginine + ATP = L-arginyl-tRNA(Arg) + AMP + diphosphate. The chain is Arginine--tRNA ligase from Methanocorpusculum labreanum (strain ATCC 43576 / DSM 4855 / Z).